The primary structure comprises 389 residues: Methylthioribose kinase (389 aa).

ATP-binding positions include asparagine 37, lysine 52, and 106–108; that span reads EDL. Aspartate 224 provides a ligand contact to substrate. 241 to 243 contributes to the ATP binding site; it reads DPE. Arginine 331 contributes to the substrate binding site.

Belongs to the methylthioribose kinase family. Homodimer.

It catalyses the reaction 5-(methylsulfanyl)-D-ribose + ATP = 5-(methylsulfanyl)-alpha-D-ribose 1-phosphate + ADP + H(+). The protein operates within amino-acid biosynthesis; L-methionine biosynthesis via salvage pathway; S-methyl-5-thio-alpha-D-ribose 1-phosphate from S-methyl-5'-thioadenosine (hydrolase route): step 2/2. In terms of biological role, catalyzes the phosphorylation of methylthioribose into methylthioribose-1-phosphate. This is Methylthioribose kinase from Exiguobacterium sibiricum (strain DSM 17290 / CCUG 55495 / CIP 109462 / JCM 13490 / 255-15).